We begin with the raw amino-acid sequence, 171 residues long: Phosphopantetheine adenylyltransferase (171 aa).

Position 9 (Thr-9) interacts with substrate. ATP is bound by residues 9 to 10 (TF) and His-17. Substrate is bound by residues Lys-41, Leu-78, and Arg-92. ATP is bound by residues 93 to 95 (GLR), Glu-103, and 128 to 134 (HQAIASK).

It belongs to the bacterial CoaD family. Homohexamer. Requires Mg(2+) as cofactor.

It is found in the cytoplasm. It catalyses the reaction (R)-4'-phosphopantetheine + ATP + H(+) = 3'-dephospho-CoA + diphosphate. It participates in cofactor biosynthesis; coenzyme A biosynthesis; CoA from (R)-pantothenate: step 4/5. In terms of biological role, reversibly transfers an adenylyl group from ATP to 4'-phosphopantetheine, yielding dephospho-CoA (dPCoA) and pyrophosphate. This chain is Phosphopantetheine adenylyltransferase, found in Dinoroseobacter shibae (strain DSM 16493 / NCIMB 14021 / DFL 12).